The following is a 412-amino-acid chain: Phosphatidylinositol 3,4,5-trisphosphate 3-phosphatase and protein-tyrosine-phosphatase PTEN1 (412 aa).

A Phosphatase tensin-type domain is found at 42–211; that stretch reads RRLIIGGYDL…KYWSDLLSFS (170 aa). Catalysis depends on C152, which acts as the Phosphocysteine intermediate. The 158-residue stretch at 239-396 folds into the C2 tensin-type domain; the sequence is VDSVFFVVSE…FSLELLFGPA (158 aa).

This sequence belongs to the PTEN phosphatase protein family. Expressed exclusively in pollen grains during the late stage of development (at protein level).

The catalysed reaction is O-phospho-L-tyrosyl-[protein] + H2O = L-tyrosyl-[protein] + phosphate. The enzyme catalyses a 1,2-diacyl-sn-glycero-3-phospho-(1D-myo-inositol-3,4,5-trisphosphate) + H2O = a 1,2-diacyl-sn-glycero-3-phospho-(1D-myo-inositol-4,5-bisphosphate) + phosphate. Its activity is regulated as follows. Inhibited by vanadate. In terms of biological role, protein tyrosine phosphatase that also exhibits lipid phosphatase activity. Can use phosphatidylinositol substrates such as PtdIns(3,4,5)P(3) as substrate. Pollen-specific phosphatase required for pollen development. In Arabidopsis thaliana (Mouse-ear cress), this protein is Phosphatidylinositol 3,4,5-trisphosphate 3-phosphatase and protein-tyrosine-phosphatase PTEN1.